The primary structure comprises 215 residues: Large ribosomal subunit protein uL4c (215 aa).

Residues 48–57 show a composition bias toward polar residues; that stretch reads SQRQGTISTK. The interval 48–85 is disordered; that stretch reads SQRQGTISTKTRSEVRGGGRKPWRQKGTGRARAGSSRS. Positions 65 to 76 are enriched in basic residues; it reads GGRKPWRQKGTG.

Belongs to the universal ribosomal protein uL4 family. As to quaternary structure, part of the 50S ribosomal subunit.

It is found in the plastid. Its subcellular location is the chloroplast. Its function is as follows. Probably binds the 23S rRNA. The polypeptide is Large ribosomal subunit protein uL4c (rpl4) (Trieres chinensis (Marine centric diatom)).